Consider the following 370-residue polypeptide: Peridinin-chlorophyll a-binding protein 1, chloroplastic (370 aa).

Residues 1 to 57 (MVRSGKKAVVLAAVAFCATSVVQKSHGFVPSPLRQRAAAAGAAAASAATMFAPAAFA) constitute a chloroplast transit peptide. 2 repeat units span residues 58–220 (DEIG…VPSG) and 221–370 (DKIG…AAQR).

In terms of assembly, homotrimer.

The protein localises to the plastid. It is found in the chloroplast. Water-soluble antenna for capture of solar energy in the blue-green range. Peridinin is an asymmetric carotenoid. This Amphidinium carterae (Dinoflagellate) protein is Peridinin-chlorophyll a-binding protein 1, chloroplastic.